A 157-amino-acid polypeptide reads, in one-letter code: Peroxiredoxin Bcp (157 aa).

Positions 3 to 156 constitute a Thioredoxin domain; that stretch reads IEIGQKAPDL…ALQTLKDMSE (154 aa). The active-site Cysteine sulfenic acid (-SOH) intermediate is C45. C45 and C50 are oxidised to a cystine.

Belongs to the peroxiredoxin family. BCP/PrxQ subfamily. As to quaternary structure, monomer.

It catalyses the reaction a hydroperoxide + [thioredoxin]-dithiol = an alcohol + [thioredoxin]-disulfide + H2O. Thiol-specific peroxidase that catalyzes the reduction of hydrogen peroxide and organic hydroperoxides to water and alcohols, respectively. Plays a role in cell protection against oxidative stress by detoxifying peroxides and as sensor of hydrogen peroxide-mediated signaling events. This Bacillus subtilis (strain 168) protein is Peroxiredoxin Bcp (ygaF).